A 912-amino-acid polypeptide reads, in one-letter code: MKNNKKVGTEDSTKWMLESVEIDPKGDSSVKQPESTINSNNPESSGAGGGILKNVSKNLAVGSIIRSMSVNKWRKSGNLGSPSTRKSGNLGPPLPVSQVKRPGPQRVERTTSSAARGLQSLRFLDRTVTGRERDSWRSIENRFNQFAVDGRLPKDKFGVCIGMGDTLEFAAKVYEALGRRRQIKTENGIDKEQLKLFWEDMIKKDLDCRLQIFFDMCDKDGDGKLTEEEVKEVIVLSASANRLVNLKKNAASYASLIMEELDPNEQGYIEMWQLEVLLTGIVSNADSHKVVRKSQQLTRAMIPKRYRTPTSKYVVVTAELMYEHWKKIWVVTLWLAVNVVLFMWKYEEFTTSPLYNITGRCLCAAKGTAEILKLNMALILVPVLRRTLTFLRSTFLNHLIPFDDNINFHKLIAVAIAVISLLHTALHMLCNYPRLSSCPYNFYSDYAGNLLGAKQPTYLGLMLTPVSVTGVLMIIFMGISFTLAMHYFRRNIVKLPIPFNRLAGFNSFWYAHHLLVIAYALLIIHGYILIIEKPWYQKTTWMYVAIPMVLYASERLFSRVQEHNHRVHIIKAIVYSGNVLALYMTKPQGFKYKSGMYMFVKCPDISKFEWHPFSITSAPGDEYLSVHIRALGDWTSELRNRFAETCEPHQKSKPSPNDLIRMETRARGANPHVEESQALFPRIFIKGPYGAPAQSYQKFDILLLIGLGIGATPFISILKDMLNNLKPGIPKTGQKYEGSVGGESLGGSSVYGGSSVNGGGSVNGGGSVSGGGRKFPQRAYFYWVTREQASFEWFKGVMDDIAVYDKTNVIEMHNYLTSMYEAGDARSALIAMVQKLQHAKNGVDIVSESRIRTHFARPNWRKVFSELSNKHETSRIGVFYCGSPTLVRPLKSLCQEFSLESSTRFTFHKENF.

2 disordered regions span residues 1-51 and 73-112; these read MKNN…GGGI and WRKSGNLGSPSTRKSGNLGPPLPVSQVKRPGPQRVERTTS. Topologically, residues 1–323 are cytoplasmic; it reads MKNNKKVGTE…VVVTAELMYE (323 aa). 2 stretches are compositionally biased toward polar residues: residues 29 to 44 and 78 to 87; these read SVKQPESTINSNNPES and NLGSPSTRKS. 2 EF-hand-like regions span residues 147–155 and 181–193; these read AVDGRLPKD and RQIKTENGIDKEQ. The EF-hand domain occupies 205–240; sequence DLDCRLQIFFDMCDKDGDGKLTEEEVKEVIVLSASA. Ca(2+)-binding residues include D218, D220, D222, K224, and E229. At S294 the chain carries Phosphoserine. A helical transmembrane segment spans residues 324 to 344; that stretch reads HWKKIWVVTLWLAVNVVLFMW. At 345–363 the chain is on the extracellular side; the sequence is KYEEFTTSPLYNITGRCLC. A helical transmembrane segment spans residues 364–384; that stretch reads AAKGTAEILKLNMALILVPVL. Residues 366 to 523 form the Ferric oxidoreductase domain; sequence KGTAEILKLN…LLVIAYALLI (158 aa). Residues 385–410 are Cytoplasmic-facing; the sequence is RRTLTFLRSTFLNHLIPFDDNINFHK. A helical transmembrane segment spans residues 411–431; it reads LIAVAIAVISLLHTALHMLCN. Topologically, residues 432–458 are extracellular; it reads YPRLSSCPYNFYSDYAGNLLGAKQPTY. The helical transmembrane segment at 459–479 threads the bilayer; it reads LGLMLTPVSVTGVLMIIFMGI. The Cytoplasmic segment spans residues 480 to 510; sequence SFTLAMHYFRRNIVKLPIPFNRLAGFNSFWY. Residues 511–531 traverse the membrane as a helical segment; the sequence is AHHLLVIAYALLIIHGYILII. At 532–697 the chain is on the extracellular side; it reads EKPWYQKTTW…PYGAPAQSYQ (166 aa). The 134-residue stretch at 562–695 folds into the FAD-binding FR-type domain; that stretch reads EHNHRVHIIK…KGPYGAPAQS (134 aa). Residues 698–718 traverse the membrane as a helical segment; sequence KFDILLLIGLGIGATPFISIL. The Cytoplasmic portion of the chain corresponds to 719 to 912; sequence KDMLNNLKPG…TRFTFHKENF (194 aa).

This sequence belongs to the RBOH (TC 5.B.1.3) family. Monomer and homodimer.

The protein localises to the membrane. In terms of biological role, calcium-dependent NADPH oxidase that generates superoxide. The protein is Putative respiratory burst oxidase homolog protein J (RBOHJ) of Arabidopsis thaliana (Mouse-ear cress).